The chain runs to 338 residues: MQIWPHKHIHSLANFSIKDYESVFELANRFDALKNSGTKKIPALQGTLVTSLFFEPSTRTKNSFELAAKRLSADVQTFAPSSSSLTKGETIIDTAITYSAMGADTLVIRHSSSYITFEIAEKLDAINSKTSVLNAGDGLHSHPSQGLLDIYTLIKFFSKNTLNPGVLNSKKILIIGDVNHSRVARSNLWALSAFGADIILCGPETLIPDEFTNFLKTPAPNQIEDPVKSRGCITISRSLEESIKIADAIIVLRLQKERMMENLLSSIDSYSLDYGLTSEKLSLNNKEIPILHPGPINRDIEISSKVVDQYPNCLINNQVSNGIPIRMALLYLLQKNNQ.

Residues arginine 59 and threonine 60 each contribute to the carbamoyl phosphate site. Residue lysine 87 participates in L-aspartate binding. 3 residues coordinate carbamoyl phosphate: arginine 109, histidine 142, and glutamine 145. Residues arginine 182 and arginine 253 each coordinate L-aspartate. Glycine 294 and proline 295 together coordinate carbamoyl phosphate.

Belongs to the aspartate/ornithine carbamoyltransferase superfamily. ATCase family. As to quaternary structure, heterododecamer (2C3:3R2) of six catalytic PyrB chains organized as two trimers (C3), and six regulatory PyrI chains organized as three dimers (R2).

It catalyses the reaction carbamoyl phosphate + L-aspartate = N-carbamoyl-L-aspartate + phosphate + H(+). The protein operates within pyrimidine metabolism; UMP biosynthesis via de novo pathway; (S)-dihydroorotate from bicarbonate: step 2/3. Its function is as follows. Catalyzes the condensation of carbamoyl phosphate and aspartate to form carbamoyl aspartate and inorganic phosphate, the committed step in the de novo pyrimidine nucleotide biosynthesis pathway. The polypeptide is Aspartate carbamoyltransferase catalytic subunit (Prochlorococcus marinus (strain MIT 9301)).